Reading from the N-terminus, the 314-residue chain is 4-hydroxy-3-methylbut-2-enyl diphosphate reductase (314 aa).

[4Fe-4S] cluster is bound at residue Cys12. (2E)-4-hydroxy-3-methylbut-2-enyl diphosphate contacts are provided by His41 and His74. Residues His41 and His74 each coordinate dimethylallyl diphosphate. Residues His41 and His74 each contribute to the isopentenyl diphosphate site. Cys96 provides a ligand contact to [4Fe-4S] cluster. Position 124 (His124) interacts with (2E)-4-hydroxy-3-methylbut-2-enyl diphosphate. His124 lines the dimethylallyl diphosphate pocket. His124 serves as a coordination point for isopentenyl diphosphate. The active-site Proton donor is Glu126. Residue Thr167 participates in (2E)-4-hydroxy-3-methylbut-2-enyl diphosphate binding. Cys197 is a [4Fe-4S] cluster binding site. (2E)-4-hydroxy-3-methylbut-2-enyl diphosphate contacts are provided by Ser225, Ser226, Asn227, and Ser269. Positions 225, 226, 227, and 269 each coordinate dimethylallyl diphosphate. Isopentenyl diphosphate-binding residues include Ser225, Ser226, Asn227, and Ser269.

This sequence belongs to the IspH family. [4Fe-4S] cluster serves as cofactor.

It catalyses the reaction isopentenyl diphosphate + 2 oxidized [2Fe-2S]-[ferredoxin] + H2O = (2E)-4-hydroxy-3-methylbut-2-enyl diphosphate + 2 reduced [2Fe-2S]-[ferredoxin] + 2 H(+). It carries out the reaction dimethylallyl diphosphate + 2 oxidized [2Fe-2S]-[ferredoxin] + H2O = (2E)-4-hydroxy-3-methylbut-2-enyl diphosphate + 2 reduced [2Fe-2S]-[ferredoxin] + 2 H(+). It functions in the pathway isoprenoid biosynthesis; dimethylallyl diphosphate biosynthesis; dimethylallyl diphosphate from (2E)-4-hydroxy-3-methylbutenyl diphosphate: step 1/1. It participates in isoprenoid biosynthesis; isopentenyl diphosphate biosynthesis via DXP pathway; isopentenyl diphosphate from 1-deoxy-D-xylulose 5-phosphate: step 6/6. Functionally, catalyzes the conversion of 1-hydroxy-2-methyl-2-(E)-butenyl 4-diphosphate (HMBPP) into a mixture of isopentenyl diphosphate (IPP) and dimethylallyl diphosphate (DMAPP). Acts in the terminal step of the DOXP/MEP pathway for isoprenoid precursor biosynthesis. The chain is 4-hydroxy-3-methylbut-2-enyl diphosphate reductase from Pseudoalteromonas atlantica (strain T6c / ATCC BAA-1087).